The primary structure comprises 1308 residues: D-lysergyl-peptide-synthetase subunit 2 (1308 aa).

An adenylation (A) domain region spans residues 261–658; sequence EWCRRTPSAV…CRKSTQVKLR (398 aa). A Carrier domain is found at 803 to 871; that stretch reads IEEAFQRFFA…ELSELARHTK (69 aa). The residue at position 835 (Ser-835) is an O-(pantetheine 4'-phosphoryl)serine. A condensation (C) domain region spans residues 910 to 1299; the sequence is EDVYPCTPLQ…HAAPRTLIGD (390 aa).

This sequence belongs to the NRP synthetase family.

Its pathway is alkaloid biosynthesis; ergot alkaloid biosynthesis. Its function is as follows. D-lysergyl-peptide-synthetase subunit 2; part of the gene cluster that mediates the biosynthesis of fungal ergot alkaloid. DmaW catalyzes the first step of ergot alkaloid biosynthesis by condensing dimethylallyl diphosphate (DMAP) and tryptophan to form 4-dimethylallyl-L-tryptophan. The second step is catalyzed by the methyltransferase easF that methylates 4-dimethylallyl-L-tryptophan in the presence of S-adenosyl-L-methionine, resulting in the formation of 4-dimethylallyl-L-abrine. The catalase easC and the FAD-dependent oxidoreductase easE then transform 4-dimethylallyl-L-abrine to chanoclavine-I which is further oxidized by EasD in the presence of NAD(+), resulting in the formation of chanoclavine-I aldehyde. Agroclavine dehydrogenase easG then mediates the conversion of chanoclavine-I aldehyde to agroclavine via a non-enzymatic adduct reaction: the substrate is an iminium intermediate that is formed spontaneously from chanoclavine-I aldehyde in the presence of glutathione. The presence of easA is not required to complete this reaction. Further conversion of agroclavine to paspalic acid is a two-step process involving oxidation of agroclavine to elymoclavine and of elymoclavine to paspalic acid, the second step being performed by the elymoclavine oxidase cloA. Paspalic acid is then further converted to D-lysergic acid. Ergopeptines are assembled from D-lysergic acid and three different amino acids by the D-lysergyl-peptide-synthetases composed each of a monomudular and a trimodular nonribosomal peptide synthetase subunit. LpsB and lpsC encode the monomodular subunits responsible for D-lysergic acid activation and incorporation into the ergopeptine backbone. LpsA1 and A2 subunits encode the trimodular nonribosomal peptide synthetase assembling the tripeptide portion of ergopeptines. LpsA1 is responsible for formation of the major ergopeptine, ergotamine, and lpsA2 for alpha-ergocryptine, the minor ergopeptine of the total alkaloid mixture elaborated by C.purpurea. D-lysergyl-tripeptides are assembled by the nonribosomal peptide synthetases and released as N-(D-lysergyl-aminoacyl)-lactams. Cyclolization of the D-lysergyl-tripeptides is performed by the Fe(2+)/2-ketoglutarate-dependent dioxygenase easH which introduces a hydroxyl group into N-(D-lysergyl-aminoacyl)-lactam at alpha-C of the aminoacyl residue followed by spontaneous condensation with the terminal lactam carbonyl group. This is D-lysergyl-peptide-synthetase subunit 2 from Claviceps purpurea (Ergot fungus).